A 296-amino-acid polypeptide reads, in one-letter code: 4-hydroxybenzoate octaprenyltransferase (296 aa).

Transmembrane regions (helical) follow at residues 28–48, 52–72, 102–122, 145–167, 174–196, 219–239, 241–261, and 275–295; these read PIGI…AGNG, LANV…GCCI, ALTL…CTNS, TYYP…FTAA, GAWL…YAMV, SIIL…GSRF, LGGW…WEYW, and FLHN…DYAL.

Belongs to the UbiA prenyltransferase family. It depends on Mg(2+) as a cofactor.

The protein resides in the cell inner membrane. It carries out the reaction all-trans-octaprenyl diphosphate + 4-hydroxybenzoate = 4-hydroxy-3-(all-trans-octaprenyl)benzoate + diphosphate. The protein operates within cofactor biosynthesis; ubiquinone biosynthesis. Catalyzes the prenylation of para-hydroxybenzoate (PHB) with an all-trans polyprenyl group. Mediates the second step in the final reaction sequence of ubiquinone-8 (UQ-8) biosynthesis, which is the condensation of the polyisoprenoid side chain with PHB, generating the first membrane-bound Q intermediate 3-octaprenyl-4-hydroxybenzoate. In Pseudomonas putida (strain ATCC 700007 / DSM 6899 / JCM 31910 / BCRC 17059 / LMG 24140 / F1), this protein is 4-hydroxybenzoate octaprenyltransferase.